A 174-amino-acid chain; its full sequence is UPF0340 protein SE_1711 (174 aa).

This sequence belongs to the UPF0340 family.

The sequence is that of UPF0340 protein SE_1711 from Staphylococcus epidermidis (strain ATCC 12228 / FDA PCI 1200).